A 579-amino-acid polypeptide reads, in one-letter code: GPI alpha-1,2-mannosyltransferase 4 (579 aa).

A run of 8 helical transmembrane segments spans residues 131–151, 156–173, 180–200, 216–236, 258–278, 369–389, 391–411, and 416–436; these read LLLT…APPM, WNAL…VFYT, IEGL…TWGP, LGGI…FAVV, ALVL…TDSW, YLLL…HQEA, FLIP…QPVP, and VVLF…GGLV.

This sequence belongs to the glycosyltransferase 22 family. PIGZ subfamily. In terms of tissue distribution, widely expressed at low level, with highest level in brain and colon.

It is found in the endoplasmic reticulum membrane. Its pathway is glycolipid biosynthesis; glycosylphosphatidylinositol-anchor biosynthesis. In terms of biological role, alpha-1,2-mannosyltransferase that catalyzes the transfer of the fourth mannose, via an alpha-1,2 bond, from a dolichol-phosphate-mannose (Dol-P-Man) to an alpha-D-Man-(1-&gt;2)-alpha-D-Man-(1-&gt;6)-2-PEtn-alpha-D-Man-(1-&gt;4)-alpha-D-GlcN-(1-&gt;6)-(1-radyl,2-acyl-sn-glycero-3-phospho)-2-acyl-inositol (also termed H6) intermediate and participates in the twelfth step of the glycosylphosphatidylinositol-anchor biosynthesis. The presence of a fourth mannose in GPI is facultative, suggesting that it only exists in some tissues. The protein is GPI alpha-1,2-mannosyltransferase 4 of Homo sapiens (Human).